A 230-amino-acid chain; its full sequence is Cytidylate kinase (230 aa).

13-21 lines the ATP pocket; that stretch reads GPAGTGKSS.

This sequence belongs to the cytidylate kinase family. Type 1 subfamily.

It is found in the cytoplasm. The catalysed reaction is CMP + ATP = CDP + ADP. The enzyme catalyses dCMP + ATP = dCDP + ADP. This Mycobacterium tuberculosis (strain ATCC 25177 / H37Ra) protein is Cytidylate kinase.